Here is a 143-residue protein sequence, read N- to C-terminus: Alpha-S2-casein-like B (143 aa).

Residues 1–15 (MKFIILTCLLAVALA) form the signal peptide.

This sequence belongs to the alpha-casein family. As to expression, mammary gland specific. Secreted in milk.

The protein localises to the secreted. In terms of biological role, important role in the capacity of milk to transport calcium phosphate. In Mus musculus (Mouse), this protein is Alpha-S2-casein-like B (Csn1s2b).